Here is a 792-residue protein sequence, read N- to C-terminus: MYNHNLIEEKWLKKWKNKDVNRFESDSNKKKYYVLDMFPYPSAAGLHLGHVRAYTITDVISRYYKAKGFNVIHPIGFDAFGLPAEQYAINSNQNPGSWTDQNINNFINQLTSFGFDYDYHLSLKTTDPRYYKYTQWIFSELFKANLAELVDIDVNWCEQLGTVLANEEVLIDSNGNAVSERGSFSVEKRKMKQWVLKITTFADALLEGLDTLDWPEPIKEMQRNWIGKSKGVTINFQLKDHKEAIAIFTTKPQTIFGVSFLAVSTNHWLAKKIAETNKKVASFLKKQLQKTTTLKQKATLYDGIDLLTNAIHPLTNELIPVYVANYVIEGYGTDAIMGVGAHNENDNFFARKQKLKIINVIDKKERLQNSFAYNGLTTKEAQVAITNELISQNKAKLTTVYKLRDWIFSRQRYWGEPFPIIFDENNTPHLVEQLPVELPLLENYKPDGSGNSPLMRNQAWVNIVKDNIHYQRETNTMPQWAGSCWYYLGYLMLIKNPNFWPIDSKEAKKLFDQYLPVDLYVGGAEHAVLHLLYARFWHKFLFDKKLVSTKEPFQKLINQGMVLGPDGKKMSKSKGNTINPTPLVDSHGADALRLYLMFMGPISASLTWNDEGLNGMRRWLDRVYNFFFNHAVVTDQVSQETIFAYNLFLKNSYCHLDKHELNLVISEMMIFLNFLYKTKKISLNYAKGFLTVLSFFAPFLAEELNEKCGLEPFVVKQAISLVDYQLFETAKTKVILSINGKFKAAKEFTKGSLEIDVLESFKQDKEINDILNQPIERVVYVQDRIINVLLKK.

The 'HIGH' region motif lies at 39 to 50; it reads PYPSAAGLHLGH. Residues 569-573 carry the 'KMSKS' region motif; that stretch reads KMSKS. Lysine 572 contacts ATP.

The protein belongs to the class-I aminoacyl-tRNA synthetase family.

The protein resides in the cytoplasm. The enzyme catalyses tRNA(Leu) + L-leucine + ATP = L-leucyl-tRNA(Leu) + AMP + diphosphate. The sequence is that of Leucine--tRNA ligase from Mycoplasma genitalium (strain ATCC 33530 / DSM 19775 / NCTC 10195 / G37) (Mycoplasmoides genitalium).